We begin with the raw amino-acid sequence, 483 residues long: Glycogen synthase (483 aa).

ADP-alpha-D-glucose is bound at residue lysine 18.

The protein belongs to the glycosyltransferase 1 family. Bacterial/plant glycogen synthase subfamily.

The enzyme catalyses [(1-&gt;4)-alpha-D-glucosyl](n) + ADP-alpha-D-glucose = [(1-&gt;4)-alpha-D-glucosyl](n+1) + ADP + H(+). Its pathway is glycan biosynthesis; glycogen biosynthesis. Functionally, synthesizes alpha-1,4-glucan chains using ADP-glucose. The polypeptide is Glycogen synthase (Rhodopseudomonas palustris (strain TIE-1)).